A 263-amino-acid polypeptide reads, in one-letter code: MTDPVDQIPDHELLDEPRLVVEPGVAARVSSVVAPVLQGMGYRLVRIKVSGEYGCTVQIMAERPDGSMQIEDCEAISKALSPVLDVADPIDKAYRLEISSPGIDRPLVRRSDFERHAGHLVKVEMAVAHQGRKRFRGILQGVKDNAIRLHRDDVQNVDESEVLLVMEDIADARLVLTDELIAESMRRGKIAEREMKRDLGILPPPPPHAKNDPARSPARRNAPKPKLKSTAKAHEKKPPKNTKEHRLAAERLRRGEIDPIEGE.

Positions 192–263 (EREMKRDLGI…RGEIDPIEGE (72 aa)) are disordered. Residues 217-231 (PARRNAPKPKLKSTA) show a composition bias toward basic residues. Positions 232–257 (KAHEKKPPKNTKEHRLAAERLRRGEI) are enriched in basic and acidic residues.

This sequence belongs to the RimP family.

Its subcellular location is the cytoplasm. Functionally, required for maturation of 30S ribosomal subunits. The protein is Ribosome maturation factor RimP of Nitrobacter hamburgensis (strain DSM 10229 / NCIMB 13809 / X14).